We begin with the raw amino-acid sequence, 686 residues long: Cation channel sperm-associated protein 1 (686 aa).

Over residues 1 to 15 the composition is skewed to basic and acidic residues; it reads MDQSSRRDESYHETH. Disordered regions lie at residues 1-57, 97-177, 207-271, and 289-318; these read MDQS…QQPY, TLPN…NRDH, DHHH…KSTA, and QSRESLRESASLSEGEDHVQKRKKAQRAHK. The Cytoplasmic segment spans residues 1–351; the sequence is MDQSSRRDES…QMILSLTQSL (351 aa). The segment covering 25–35 has biased composition (basic residues); that stretch reads SHPHPHPHPTL. Positions 128–142 are enriched in basic and acidic residues; that stretch reads DPNHHPHQDDPHRPS. Over residues 147 to 160 the composition is skewed to polar residues; it reads HPSSTGSHQGTTHQ. Basic residues-rich tracts occupy residues 211–229 and 235–244; these read EGHHAHSHHGEHPHHKEQR and HMHHHIHHRS. Residues 245-271 are compositionally biased toward polar residues; that stretch reads PSASQLSHKSHSTLATSPSHVGSKSTA. Basic residues predominate over residues 308 to 318; sequence QKRKKAQRAHK. Residues 352–373 traverse the membrane as a helical segment; it reads GFETFIFIVVCLNTVILVAQTF. The Extracellular segment spans residues 374 to 382; that stretch reads TELEIRGEW. Residues 383 to 404 traverse the membrane as a helical segment; sequence YFMVLDSIFLSIYVLEAVLKLI. At 405 to 412 the chain is on the cytoplasmic side; that stretch reads ALGLEYFY. A helical transmembrane segment spans residues 413–435; the sequence is DPWNNLDFFIMVMAVLDFVLLQI. Residues 436–446 lie on the Extracellular side of the membrane; the sequence is NSLSYSFYNHS. Residues 447–469 traverse the membrane as a helical segment; the sequence is LFRILKVFKSMRALRAIRVLRRL. The Cytoplasmic portion of the chain corresponds to 470–487; that stretch reads SILTSLHEVAGTLSGSLP. A helical membrane pass occupies residues 488–510; it reads SITAILTLMFTCLFLFSVVLRAL. At 511–521 the chain is on the extracellular side; the sequence is FQDSDPKRFQN. The segment at residues 522 to 534 is an intramembrane region (helical; Pore-forming); the sequence is IFTTLFTLFTMLT. At 535–551 the chain is on the extracellular side; the sequence is LDDWSLIYIDNRAQGAW. Residues 552-577 form a helical membrane-spanning segment; the sequence is YIIPILMIYIVIQYFIFLNLVIAVLV. Over 578–686 the chain is Cytoplasmic; the sequence is DNFQMALLKG…FEAGDDDYGK (109 aa).

This sequence belongs to the cation channel sperm-associated (TC 1.A.1.19) family. In terms of assembly, component of the CatSper complex or CatSpermasome composed of the core pore-forming members CATSPER1, CATSPER2, CATSPER3 and CATSPER4 as well as auxiliary members CATSPERB, CATSPERG2, CATSPERD, CATSPERE, CATSPERZ, C2CD6/CATSPERT, SLCO6C1, TMEM249, TMEM262 and EFCAB9. HSPA1 may be an additional auxiliary complex member. The core complex members CATSPER1, CATSPER2, CATSPER3 and CATSPER4 form a heterotetrameric channel. The auxiliary CATSPERB, CATSPERG2, CATSPERD and CATSPERE subunits form a pavilion-like structure over the pore which stabilizes the complex through interactions with CATSPER4, CATSPER3, CATSPER1 and CATSPER2 respectively. SLCO6C1 interacts with CATSPERE, and TMEM262/CATSPERH interacts with CATSPERB, further stabilizing the complex. C2CD6/CATSPERT interacts at least with CATSPERD and is required for targeting the CatSper complex in the flagellar membrane. Interacts with Ca(v)3.3/CACNA1I, leading to suppression of T-type calcium channel activity. Testis-specific.

The protein localises to the cell projection. It is found in the cilium. It localises to the flagellum membrane. It catalyses the reaction Ca(2+)(in) = Ca(2+)(out). Its activity is regulated as follows. Activated by intracellular alkalinization. In contrast to the human ortholog, not activated by progesterone. Its function is as follows. Pore-forming subunit of the CatSper complex, a sperm-specific voltage-gated calcium channel that plays a central role in sperm cell hyperactivation. Controls calcium entry to mediate the hyperactivated motility, a step needed for sperm motility which is essential late in the preparation of sperm for fertilization. The polypeptide is Cation channel sperm-associated protein 1 (Catsper1) (Mus musculus (Mouse)).